Reading from the N-terminus, the 460-residue chain is Argininosuccinate lyase (460 aa).

This sequence belongs to the lyase 1 family. Argininosuccinate lyase subfamily.

It localises to the cytoplasm. It catalyses the reaction 2-(N(omega)-L-arginino)succinate = fumarate + L-arginine. Its pathway is amino-acid biosynthesis; L-arginine biosynthesis; L-arginine from L-ornithine and carbamoyl phosphate: step 3/3. The protein is Argininosuccinate lyase of Pelotomaculum thermopropionicum (strain DSM 13744 / JCM 10971 / SI).